We begin with the raw amino-acid sequence, 127 residues long: Glycine cleavage system H protein (127 aa).

In terms of domain architecture, Lipoyl-binding spans 22 to 104 (KARIGITHFA…YEKAWMIVVE (83 aa)). An N6-lipoyllysine modification is found at lysine 63.

This sequence belongs to the GcvH family. In terms of assembly, the glycine cleavage system is composed of four proteins: P, T, L and H. The cofactor is (R)-lipoate.

In terms of biological role, the glycine cleavage system catalyzes the degradation of glycine. The H protein shuttles the methylamine group of glycine from the P protein to the T protein. Its function is as follows. Is also involved in protein lipoylation via its role as an octanoyl/lipoyl carrier protein intermediate. The protein is Glycine cleavage system H protein of Bacillus velezensis (strain DSM 23117 / BGSC 10A6 / LMG 26770 / FZB42) (Bacillus amyloliquefaciens subsp. plantarum).